The primary structure comprises 88 residues: MDILKLSDFIGNTLIVSLTEDRILVGSLVAVDAQMNLLLDHVEERMGSSSRMMGLVSVPRRSVKTIMIDKPVLQELTANKVELMANIV.

In terms of domain architecture, Sm spans 1 to 72; it reads MDILKLSDFI…VKTIMIDKPV (72 aa).

In terms of assembly, component of the N-terminal acetyltransferase C (NatC) complex, composed of the catalytic subunit Naa30/MAK3, a large auxiliary subunit Naa35/MAK10 and a small auxiliary subunit Naa38/MAK31.

In terms of biological role, component of the NatC N-terminal acetyltransferase, which associates with the ribosome to acetylate nascent protein chains in a cotranslational manner. NatC acetylates protein N-termini starting with methionine, followed by a hydrophobic or amphipathic amino acid, with amino acids at positions 3 and 4 also contributing to NatC recognition. The first 4 amino acids of cognate substrates are recognized at the Naa30/MAK3-Naa35/MAK10 interface. NatC-dependent acetylation targets various substrate proteins to specific subcellular sites, including isoform 2 of tRNA-specific methyltransferase Trm1 to the inner nuclear membrane. Catalyzes the acetylation of the N-terminal Met of ARF-like GTPase ARL3, which is required for its Golgi localization via interaction with the Golgi-localized integral membrane protein SYS1, which may serve as a receptor for acetylated ARL3. Catalyzes the acetylation of the N-terminal Met of L-A virus Gag protein. MAK31 is necessary for the structural stability of L-A double-stranded RNA-containing particles. Necessary for growth at 37 degrees Celsius as well as for maintenance of the killer plasmid. In Saccharomyces cerevisiae (strain ATCC 204508 / S288c) (Baker's yeast), this protein is N-alpha-acetyltransferase 38, NatC auxiliary subunit (MAK31).